The sequence spans 350 residues: Adenine DNA glycosylase (350 aa).

Glutamate 37 (proton donor/acceptor) is an active-site residue. Cysteine 192, cysteine 199, cysteine 202, and cysteine 208 together coordinate [4Fe-4S] cluster.

Belongs to the Nth/MutY family. Monomer. [4Fe-4S] cluster is required as a cofactor.

It carries out the reaction Hydrolyzes free adenine bases from 7,8-dihydro-8-oxoguanine:adenine mismatched double-stranded DNA, leaving an apurinic site.. Its function is as follows. Adenine glycosylase active on G-A mispairs. MutY also corrects error-prone DNA synthesis past GO lesions which are due to the oxidatively damaged form of guanine: 7,8-dihydro-8-oxoguanine (8-oxo-dGTP). The polypeptide is Adenine DNA glycosylase (mutY) (Escherichia coli (strain K12)).